The sequence spans 277 residues: 2-dehydro-3-deoxyphosphooctonate aldolase (277 aa).

It belongs to the KdsA family.

It localises to the cytoplasm. The catalysed reaction is D-arabinose 5-phosphate + phosphoenolpyruvate + H2O = 3-deoxy-alpha-D-manno-2-octulosonate-8-phosphate + phosphate. It participates in carbohydrate biosynthesis; 3-deoxy-D-manno-octulosonate biosynthesis; 3-deoxy-D-manno-octulosonate from D-ribulose 5-phosphate: step 2/3. The protein operates within bacterial outer membrane biogenesis; lipopolysaccharide biosynthesis. This is 2-dehydro-3-deoxyphosphooctonate aldolase from Syntrophotalea carbinolica (strain DSM 2380 / NBRC 103641 / GraBd1) (Pelobacter carbinolicus).